Reading from the N-terminus, the 270-residue chain is UPF0354 protein Bcer98_3354 (270 aa).

The protein belongs to the UPF0354 family.

In Bacillus cytotoxicus (strain DSM 22905 / CIP 110041 / 391-98 / NVH 391-98), this protein is UPF0354 protein Bcer98_3354.